Here is a 944-residue protein sequence, read N- to C-terminus: Leucine--tRNA ligase (944 aa).

The 'HIGH' region signature appears at 40-51 (PYPSGAGLHVGH). The short motif at 718–722 (KMSKS) is the 'KMSKS' region element. Residue Lys721 coordinates ATP.

The protein belongs to the class-I aminoacyl-tRNA synthetase family.

Its subcellular location is the cytoplasm. It catalyses the reaction tRNA(Leu) + L-leucine + ATP = L-leucyl-tRNA(Leu) + AMP + diphosphate. The protein is Leucine--tRNA ligase of Phocaeicola vulgatus (strain ATCC 8482 / DSM 1447 / JCM 5826 / CCUG 4940 / NBRC 14291 / NCTC 11154) (Bacteroides vulgatus).